We begin with the raw amino-acid sequence, 269 residues long: Diaminopimelate epimerase (269 aa).

Substrate-binding residues include N20 and N63. The Proton donor role is filled by C72. Substrate is bound by residues 73–74 (GN), N179, and 197–198 (ER). C207 functions as the Proton acceptor in the catalytic mechanism. Residue 208-209 (GT) coordinates substrate.

Belongs to the diaminopimelate epimerase family. Homodimer.

It localises to the cytoplasm. It carries out the reaction (2S,6S)-2,6-diaminopimelate = meso-2,6-diaminopimelate. It participates in amino-acid biosynthesis; L-lysine biosynthesis via DAP pathway; DL-2,6-diaminopimelate from LL-2,6-diaminopimelate: step 1/1. Its function is as follows. Catalyzes the stereoinversion of LL-2,6-diaminopimelate (L,L-DAP) to meso-diaminopimelate (meso-DAP), a precursor of L-lysine and an essential component of the bacterial peptidoglycan. The polypeptide is Diaminopimelate epimerase (Chlamydia muridarum (strain MoPn / Nigg)).